The following is a 279-amino-acid chain: Proteasome subunit alpha type-1 (279 aa).

Y103 bears the Phosphotyrosine mark. A compositionally biased stretch (basic and acidic residues) spans 235 to 249 (HVAIAKENDNDTPRN). The segment at 235-279 (HVAIAKENDNDTPRNDDDDDRPSPPEEPAAGPRDPEVLVATEQRP) is disordered.

It belongs to the peptidase T1A family. In terms of assembly, the 26S proteasome consists of a 20S proteasome core and two 19S regulatory subunits. The 20S proteasome core is composed of 28 subunits that are arranged in four stacked rings, resulting in a barrel-shaped structure. The two end rings are each formed by seven alpha subunits, and the two central rings are each formed by seven beta subunits. The catalytic chamber with the active sites is on the inside of the barrel. Interacts with PI31.

Its subcellular location is the cytoplasm. The protein resides in the nucleus. The proteasome is a multicatalytic proteinase complex which is characterized by its ability to cleave peptides with Arg, Phe, Tyr, Leu, and Glu adjacent to the leaving group at neutral or slightly basic pH. The proteasome has an ATP-dependent proteolytic activity. The chain is Proteasome subunit alpha type-1 (Prosalpha6) from Drosophila melanogaster (Fruit fly).